The chain runs to 470 residues: N amino acid transport system protein (470 aa).

Residues Met1 to Asp11 show a composition bias toward basic and acidic residues. The segment at Met1–Ser21 is disordered. Residues Met1–Lys56 lie on the Extracellular side of the membrane. A run of 2 helical transmembrane segments spans residues Arg57 to Ala77 and Phe78 to Ile98. Topologically, residues Tyr99 to Glu131 are extracellular. Residues Ile132–Gly152 traverse the membrane as a helical segment. Topologically, residues Thr153–Ser168 are cytoplasmic. The next 2 membrane-spanning stretches (helical) occupy residues Leu169 to Ala189 and Val191 to Ile211. The Cytoplasmic segment spans residues Ala212–Asp236. The helical transmembrane segment at Leu237–Met257 threads the bilayer. The Extracellular segment spans residues Cys258–Ser275. The helical transmembrane segment at Ile276–Ala296 threads the bilayer. Over Phe297 to Lys316 the chain is Cytoplasmic. Residues Val317–Val337 form a helical membrane-spanning segment. At Ser338 to Pro357 the chain is on the extracellular side. Residues Ala358 to Ala378 form a helical membrane-spanning segment. Residues Glu379 to Asp386 are Cytoplasmic-facing. Residues Leu387–Met407 traverse the membrane as a helical segment. Over Tyr408–Ala427 the chain is Extracellular. The chain crosses the membrane as a helical span at residues Leu428–Ile448. Residues Gln449–Ala470 are Cytoplasmic-facing.

The protein belongs to the amino acid/polyamine transporter 2 family.

The protein resides in the membrane. In terms of biological role, required for the transport of neutral aliphatic and aromatic amino acids via the N system. The protein is N amino acid transport system protein (mtr) of Neurospora crassa (strain ATCC 24698 / 74-OR23-1A / CBS 708.71 / DSM 1257 / FGSC 987).